The chain runs to 386 residues: Caspase-12 (386 aa).

The CARD domain occupies 1–91 (MAGKRQSQDP…LLSLKSHAEN (91 aa)). Ser84 is modified (phosphoserine). Active-site residues include His218 and Cys266.

This sequence belongs to the peptidase C14A family. In terms of assembly, heterotetramer that consists of two anti-parallel arranged heterodimers, each one formed by two subunits (Potential). May interact with TRAF2.

Involved in the activation cascade of caspases responsible for apoptosis execution. This chain is Caspase-12, found in Canis lupus familiaris (Dog).